The primary structure comprises 151 residues: NADPH-dependent 7-cyano-7-deazaguanine reductase (151 aa).

C51 serves as the catalytic Thioimide intermediate. The active-site Proton donor is D58. Residues 73–75 and 92–93 each bind substrate; these read VES and HE.

Belongs to the GTP cyclohydrolase I family. QueF type 1 subfamily.

It is found in the cytoplasm. The catalysed reaction is 7-aminomethyl-7-carbaguanine + 2 NADP(+) = 7-cyano-7-deazaguanine + 2 NADPH + 3 H(+). It participates in tRNA modification; tRNA-queuosine biosynthesis. Its function is as follows. Catalyzes the NADPH-dependent reduction of 7-cyano-7-deazaguanine (preQ0) to 7-aminomethyl-7-deazaguanine (preQ1). The chain is NADPH-dependent 7-cyano-7-deazaguanine reductase from Bacteroides fragilis (strain YCH46).